The chain runs to 522 residues: Lysophospholipid acyltransferase LPCAT4 (522 aa).

2 consecutive transmembrane segments (helical) span residues 43–63 (ILGF…LFLM) and 92–112 (HLIY…WITI). The HXXXXD motif motif lies at 130 to 135 (HSTFFD). N-linked (GlcNAc...) asparagine glycans are attached at residues Asn-166 and Asn-517. Positions 496 to 522 (GRRKPPHIQQNGGCSGKNNPRNQSKMD) are disordered. Residues 503–522 (IQQNGGCSGKNNPRNQSKMD) show a composition bias toward polar residues.

The protein belongs to the 1-acyl-sn-glycerol-3-phosphate acyltransferase family.

The protein resides in the endoplasmic reticulum membrane. The catalysed reaction is a 1-acyl-sn-glycero-3-phosphoethanolamine + an acyl-CoA = a 1,2-diacyl-sn-glycero-3-phosphoethanolamine + CoA. It catalyses the reaction a 1-O-(1Z-alkenyl)-sn-glycero-3-phosphoethanolamine + an acyl-CoA = a 1-O-(1Z-alkenyl)-2-acyl-sn-glycero-3-phosphoethanolamine + CoA. It carries out the reaction a 1-acyl-sn-glycero-3-phosphocholine + an acyl-CoA = a 1,2-diacyl-sn-glycero-3-phosphocholine + CoA. The enzyme catalyses a 1-O-alkyl-sn-glycero-3-phosphocholine + acetyl-CoA = a 1-O-alkyl-2-acetyl-sn-glycero-3-phosphocholine + CoA. The catalysed reaction is a 1-acyl-sn-glycero-3-phospho-L-serine + an acyl-CoA = a 1,2-diacyl-sn-glycero-3-phospho-L-serine + CoA. It functions in the pathway lipid metabolism; phospholipid metabolism. Displays acyl-CoA-dependent lysophospholipid acyltransferase activity with a subset of lysophospholipids as substrates. Prefers long chain acyl-CoAs (C16, C18) as acyl donors. In Xenopus tropicalis (Western clawed frog), this protein is Lysophospholipid acyltransferase LPCAT4 (lpcat4).